The sequence spans 560 residues: Proline--tRNA ligase (560 aa).

Belongs to the class-II aminoacyl-tRNA synthetase family. ProS type 1 subfamily. As to quaternary structure, homodimer.

It is found in the cytoplasm. It carries out the reaction tRNA(Pro) + L-proline + ATP = L-prolyl-tRNA(Pro) + AMP + diphosphate. In terms of biological role, catalyzes the attachment of proline to tRNA(Pro) in a two-step reaction: proline is first activated by ATP to form Pro-AMP and then transferred to the acceptor end of tRNA(Pro). As ProRS can inadvertently accommodate and process non-cognate amino acids such as alanine and cysteine, to avoid such errors it has two additional distinct editing activities against alanine. One activity is designated as 'pretransfer' editing and involves the tRNA(Pro)-independent hydrolysis of activated Ala-AMP. The other activity is designated 'posttransfer' editing and involves deacylation of mischarged Ala-tRNA(Pro). The misacylated Cys-tRNA(Pro) is not edited by ProRS. The chain is Proline--tRNA ligase from Vesicomyosocius okutanii subsp. Calyptogena okutanii (strain HA).